The primary structure comprises 347 residues: Peptidoglycan recognition protein 3 (347 aa).

An N-terminal signal peptide occupies residues 1–26 (MLVSWDHPKMLPRLLGFLALSLLACG). N-acetylmuramoyl-L-alanine amidase domains are found at residues 77-185 (LQSQ…KACP) and 206-328 (PAKF…VSNI). N-linked (GlcNAc...) asparagine glycosylation is present at Asn-120. 3 cysteine pairs are disulfide-bonded: Cys-184-Cys-306, Cys-200-Cys-244, and Cys-220-Cys-226. Peptidoglycan-binding residues include His-237 and Tyr-248. The interaction with murein stretch occupies residues 270–275 (HTYGYN).

The protein belongs to the N-acetylmuramoyl-L-alanine amidase 2 family. Monomer. Homodimer; disulfide-linked. Heterodimer with PGLYRP4; disulfide-linked. Detected in lung, spleen and stomach, and at low levels in eye, heart, thymus and testis.

The protein localises to the secreted. In terms of biological role, pattern receptor that binds to murein peptidoglycans (PGN) of Gram-positive bacteria. Has bactericidal activity towards Gram-positive bacteria. May kill Gram-positive bacteria by interfering with peptidoglycan biosynthesis. Also binds to Gram-negative bacteria, and has bacteriostatic activity towards Gram-negative bacteria. Plays a role in innate immunity. The polypeptide is Peptidoglycan recognition protein 3 (Pglyrp3) (Mus musculus (Mouse)).